A 426-amino-acid polypeptide reads, in one-letter code: F-box protein At2g15640 (426 aa).

Positions 1–48 (MNPSTITNDLTVEILSRLPAKSVARFHCVSKQWGSIFGSPYFKELFLT) constitute an F-box domain.

This chain is F-box protein At2g15640, found in Arabidopsis thaliana (Mouse-ear cress).